The sequence spans 21 residues: Venom peptide Tv1 (21 aa).

Intrachain disulfides connect Cys-4-Cys-20, Cys-5-Cys-21, and Cys-7-Cys-16.

In terms of tissue distribution, expressed by the salivary gland. This peptide is considered as a venom peptide.

It is found in the secreted. In terms of biological role, injections of 20 uM of this synthetic peptide (Ile) causes partial paralysis to polychaete worms (Nereis virens), the natural prey of terebrid snails. This paralysis may be due to an inhibition of nicotinic receptors at the neuromuscular junction. The polypeptide is Venom peptide Tv1 (Terebra variegata (Variegate auger snail)).